A 474-amino-acid chain; its full sequence is Bifunctional protein HldE (474 aa).

The tract at residues 1–318 (MKLSMPRFDQ…RAIQREEGSE (318 aa)) is ribokinase. 194-197 (NLSE) lines the ATP pocket. The active site involves Asp-263. The tract at residues 343 to 474 (FTNGCFDILH…AIVEKIRGQG (132 aa)) is cytidylyltransferase.

It in the N-terminal section; belongs to the carbohydrate kinase PfkB family. In the C-terminal section; belongs to the cytidylyltransferase family. Homodimer.

It carries out the reaction D-glycero-beta-D-manno-heptose 7-phosphate + ATP = D-glycero-beta-D-manno-heptose 1,7-bisphosphate + ADP + H(+). The enzyme catalyses D-glycero-beta-D-manno-heptose 1-phosphate + ATP + H(+) = ADP-D-glycero-beta-D-manno-heptose + diphosphate. The protein operates within nucleotide-sugar biosynthesis; ADP-L-glycero-beta-D-manno-heptose biosynthesis; ADP-L-glycero-beta-D-manno-heptose from D-glycero-beta-D-manno-heptose 7-phosphate: step 1/4. It participates in nucleotide-sugar biosynthesis; ADP-L-glycero-beta-D-manno-heptose biosynthesis; ADP-L-glycero-beta-D-manno-heptose from D-glycero-beta-D-manno-heptose 7-phosphate: step 3/4. In terms of biological role, catalyzes the phosphorylation of D-glycero-D-manno-heptose 7-phosphate at the C-1 position to selectively form D-glycero-beta-D-manno-heptose-1,7-bisphosphate. Its function is as follows. Catalyzes the ADP transfer from ATP to D-glycero-beta-D-manno-heptose 1-phosphate, yielding ADP-D-glycero-beta-D-manno-heptose. This is Bifunctional protein HldE from Pseudomonas savastanoi pv. phaseolicola (strain 1448A / Race 6) (Pseudomonas syringae pv. phaseolicola (strain 1448A / Race 6)).